The chain runs to 370 residues: Putative F-box protein At1g47390 (370 aa).

Residues Met1 to His47 enclose the F-box domain.

The chain is Putative F-box protein At1g47390 from Arabidopsis thaliana (Mouse-ear cress).